The chain runs to 444 residues: Putative dipeptidase CPC735_015490 (444 aa).

The N-terminal stretch at 1-34 (MSQRTEHNGSWLRNAGSLLSVLACVAVLASPASA) is a signal peptide. Residues H67, D69, and E178 each contribute to the Zn(2+) site. A disulfide bridge connects residues C118 and C207. H205 serves as a coordination point for substrate. Positions 250 and 271 each coordinate Zn(2+). Substrate-binding residues include R282 and D342. Residue N413 is glycosylated (N-linked (GlcNAc...) asparagine).

Belongs to the metallo-dependent hydrolases superfamily. Peptidase M19 family. Zn(2+) is required as a cofactor.

The catalysed reaction is an L-aminoacyl-L-amino acid + H2O = 2 an L-alpha-amino acid. Functionally, hydrolyzes a wide range of dipeptides. This chain is Putative dipeptidase CPC735_015490, found in Coccidioides posadasii (strain C735) (Valley fever fungus).